The chain runs to 543 residues: Chaperonin GroEL (543 aa).

Residues 29-32, 86-90, Gly-413, 477-479, and Asp-493 each bind ATP; these read TLGP, DGTTT, and DAL.

It belongs to the chaperonin (HSP60) family. Forms a cylinder of 14 subunits composed of two heptameric rings stacked back-to-back. Interacts with the co-chaperonin GroES.

It is found in the cytoplasm. It catalyses the reaction ATP + H2O + a folded polypeptide = ADP + phosphate + an unfolded polypeptide.. Together with its co-chaperonin GroES, plays an essential role in assisting protein folding. The GroEL-GroES system forms a nano-cage that allows encapsulation of the non-native substrate proteins and provides a physical environment optimized to promote and accelerate protein folding. In Clostridium novyi (strain NT), this protein is Chaperonin GroEL.